Reading from the N-terminus, the 197-residue chain is Xanthine phosphoribosyltransferase (197 aa).

Residues L20 and T27 each contribute to the xanthine site. Residue 128–132 participates in 5-phospho-alpha-D-ribose 1-diphosphate binding; sequence ANGQA. Residue K156 participates in xanthine binding.

Belongs to the purine/pyrimidine phosphoribosyltransferase family. Xpt subfamily. Homodimer.

It is found in the cytoplasm. The enzyme catalyses XMP + diphosphate = xanthine + 5-phospho-alpha-D-ribose 1-diphosphate. The protein operates within purine metabolism; XMP biosynthesis via salvage pathway; XMP from xanthine: step 1/1. In terms of biological role, converts the preformed base xanthine, a product of nucleic acid breakdown, to xanthosine 5'-monophosphate (XMP), so it can be reused for RNA or DNA synthesis. The polypeptide is Xanthine phosphoribosyltransferase (Lactococcus lactis subsp. lactis (strain IL1403) (Streptococcus lactis)).